The sequence spans 281 residues: 2-dehydro-3-deoxyphosphooctonate aldolase (281 aa).

This sequence belongs to the KdsA family.

It is found in the cytoplasm. The catalysed reaction is D-arabinose 5-phosphate + phosphoenolpyruvate + H2O = 3-deoxy-alpha-D-manno-2-octulosonate-8-phosphate + phosphate. Its pathway is carbohydrate biosynthesis; 3-deoxy-D-manno-octulosonate biosynthesis; 3-deoxy-D-manno-octulosonate from D-ribulose 5-phosphate: step 2/3. It participates in bacterial outer membrane biogenesis; lipopolysaccharide biosynthesis. The chain is 2-dehydro-3-deoxyphosphooctonate aldolase from Hahella chejuensis (strain KCTC 2396).